Consider the following 180-residue polypeptide: Ribulose bisphosphate carboxylase small subunit, chloroplastic 1 (180 aa).

Residues 1-56 (MASSVLSSAAVATRSNVAQANMVAPFTGLKSAASFPVSRKQNLDITSIASNGGRVQ) constitute a chloroplast transit peptide.

It belongs to the RuBisCO small chain family. As to quaternary structure, heterohexadecamer of 8 large and 8 small subunits.

It is found in the plastid. The protein resides in the chloroplast. RuBisCO catalyzes two reactions: the carboxylation of D-ribulose 1,5-bisphosphate, the primary event in carbon dioxide fixation, as well as the oxidative fragmentation of the pentose substrate. Both reactions occur simultaneously and in competition at the same active site. Although the small subunit is not catalytic it is essential for maximal activity. In Nicotiana sylvestris (Wood tobacco), this protein is Ribulose bisphosphate carboxylase small subunit, chloroplastic 1.